The primary structure comprises 299 residues: MDPSILSKIHYSGITCNNYGFYNTPFYLKRDKEDNVECYQTNIFMYYDDHDDHNMTDCDYTYCFVKDLCVSICRGSDDNDENHSFLKAKIIISDSLKLTGIKNDTDGSIEFPQIDNENPLILREDNSTTIKINLFGQLSDLINYQIQVKFSAGVIDKSTADYFNNNEFVCFDDFTFSRGTYLENSDSTESEFYREAILIKGRKFDFYPYQGHHVFDIEYDFLDHNFNPIQPSNNLLEKLYFVKDHNKSKISSICSYTETNPLLVDKYYDDNYIDGLFEIMRKKEMVLYVKFMVKKIDSD.

This is an uncharacterized protein from Acanthamoeba polyphaga mimivirus (APMV).